The primary structure comprises 334 residues: N-acetyl-gamma-glutamyl-phosphate reductase (334 aa).

The active site involves Cys145. Positions 173 to 192 (GISGSGQDPTEGTHYPNVTQ) are disordered.

This sequence belongs to the NAGSA dehydrogenase family. Type 1 subfamily.

The protein resides in the cytoplasm. The catalysed reaction is N-acetyl-L-glutamate 5-semialdehyde + phosphate + NADP(+) = N-acetyl-L-glutamyl 5-phosphate + NADPH + H(+). The protein operates within amino-acid biosynthesis; L-arginine biosynthesis; N(2)-acetyl-L-ornithine from L-glutamate: step 3/4. Its function is as follows. Catalyzes the NADPH-dependent reduction of N-acetyl-5-glutamyl phosphate to yield N-acetyl-L-glutamate 5-semialdehyde. The sequence is that of N-acetyl-gamma-glutamyl-phosphate reductase from Methanocella arvoryzae (strain DSM 22066 / NBRC 105507 / MRE50).